A 138-amino-acid polypeptide reads, in one-letter code: Large-conductance mechanosensitive channel (138 aa).

3 helical membrane-spanning segments follow: residues 15–35, 38–58, and 80–100; these read VDLA…NSIV, IIMP…MFIQ, and GNFI…FLVV.

Belongs to the MscL family. In terms of assembly, homopentamer.

Its subcellular location is the cell inner membrane. In terms of biological role, channel that opens in response to stretch forces in the membrane lipid bilayer. May participate in the regulation of osmotic pressure changes within the cell. This Brucella canis (strain ATCC 23365 / NCTC 10854 / RM-666) protein is Large-conductance mechanosensitive channel.